The chain runs to 201 residues: Holliday junction branch migration complex subunit RuvA (201 aa).

The tract at residues 1-63 (MIAYIKGTLN…EDAQILFGFQ (63 aa)) is domain I. The tract at residues 64-142 (NRDEKYLFTK…SVFSITDEQQ (79 aa)) is domain II. The segment at 143–149 (KSSVSNV) is flexible linker. The segment at 150–201 (NNNEVYSEAMEALKALGYTDKEVKQVLPHLKKDNDALSVDEAIRKALALLAK) is domain III.

The protein belongs to the RuvA family. Homotetramer. Forms an RuvA(8)-RuvB(12)-Holliday junction (HJ) complex. HJ DNA is sandwiched between 2 RuvA tetramers; dsDNA enters through RuvA and exits via RuvB. An RuvB hexamer assembles on each DNA strand where it exits the tetramer. Each RuvB hexamer is contacted by two RuvA subunits (via domain III) on 2 adjacent RuvB subunits; this complex drives branch migration. In the full resolvosome a probable DNA-RuvA(4)-RuvB(12)-RuvC(2) complex forms which resolves the HJ.

It is found in the cytoplasm. The RuvA-RuvB-RuvC complex processes Holliday junction (HJ) DNA during genetic recombination and DNA repair, while the RuvA-RuvB complex plays an important role in the rescue of blocked DNA replication forks via replication fork reversal (RFR). RuvA specifically binds to HJ cruciform DNA, conferring on it an open structure. The RuvB hexamer acts as an ATP-dependent pump, pulling dsDNA into and through the RuvAB complex. HJ branch migration allows RuvC to scan DNA until it finds its consensus sequence, where it cleaves and resolves the cruciform DNA. This Oceanobacillus iheyensis (strain DSM 14371 / CIP 107618 / JCM 11309 / KCTC 3954 / HTE831) protein is Holliday junction branch migration complex subunit RuvA.